A 204-amino-acid polypeptide reads, in one-letter code: Peptidyl-tRNA hydrolase (204 aa).

Tyr19 is a binding site for tRNA. His24 functions as the Proton acceptor in the catalytic mechanism. 3 residues coordinate tRNA: Tyr70, Asn72, and Asn118.

The protein belongs to the PTH family. Monomer.

The protein localises to the cytoplasm. The enzyme catalyses an N-acyl-L-alpha-aminoacyl-tRNA + H2O = an N-acyl-L-amino acid + a tRNA + H(+). In terms of biological role, hydrolyzes ribosome-free peptidyl-tRNAs (with 1 or more amino acids incorporated), which drop off the ribosome during protein synthesis, or as a result of ribosome stalling. Catalyzes the release of premature peptidyl moieties from peptidyl-tRNA molecules trapped in stalled 50S ribosomal subunits, and thus maintains levels of free tRNAs and 50S ribosomes. This Prochlorococcus marinus (strain SARG / CCMP1375 / SS120) protein is Peptidyl-tRNA hydrolase.